The chain runs to 80 residues: MEIPKLLYIAVIAIGLSGSLTWATPLANPLAEAEAEAKATAEATAEALAEALAEPEPGLPILAAAVVIPFIHHYLVGKFG.

Positions methionine 1 to alanine 23 are cleaved as a signal peptide. Positions threonine 24–proline 57 are excised as a propeptide. Phenylalanine 79 is modified (phenylalanine amide).

The protein belongs to the formicidae venom clade 1 family. In terms of tissue distribution, expressed by the venom gland.

Its subcellular location is the secreted. Functionally, vertebrate-selective toxin that causes pain by targeting voltage-gated sodium channels. In Pogonomyrmex rugosus (Desert harvester ant), this protein is Myrmicitoxin(1)-Pr1a.